Reading from the N-terminus, the 377-residue chain is Cytoplasmic tRNA 2-thiolation protein 1 (377 aa).

The protein belongs to the TtcA family. CTU1/NCS6/ATPBD3 subfamily.

It is found in the cytoplasm. The protein operates within tRNA modification; 5-methoxycarbonylmethyl-2-thiouridine-tRNA biosynthesis. Plays a central role in 2-thiolation of mcm(5)S(2)U at tRNA wobble positions of tRNA(Lys), tRNA(Glu) and tRNA(Gln). Directly binds tRNAs and probably acts by catalyzing adenylation of tRNAs, an intermediate required for 2-thiolation. It is unclear whether it acts as a sulfurtransferase that transfers sulfur from thiocarboxylated URM1 onto the uridine of tRNAs at wobble position. Prior mcm(5) tRNA modification by the elongator complex is required for 2-thiolation. May also be involved in protein urmylation. The polypeptide is Cytoplasmic tRNA 2-thiolation protein 1 (Debaryomyces hansenii (strain ATCC 36239 / CBS 767 / BCRC 21394 / JCM 1990 / NBRC 0083 / IGC 2968) (Yeast)).